A 350-amino-acid polypeptide reads, in one-letter code: UDP-3-O-acylglucosamine N-acyltransferase (350 aa).

Histidine 244 (proton acceptor) is an active-site residue.

This sequence belongs to the transferase hexapeptide repeat family. LpxD subfamily. As to quaternary structure, homotrimer.

It carries out the reaction a UDP-3-O-[(3R)-3-hydroxyacyl]-alpha-D-glucosamine + a (3R)-hydroxyacyl-[ACP] = a UDP-2-N,3-O-bis[(3R)-3-hydroxyacyl]-alpha-D-glucosamine + holo-[ACP] + H(+). It functions in the pathway bacterial outer membrane biogenesis; LPS lipid A biosynthesis. Catalyzes the N-acylation of UDP-3-O-acylglucosamine using 3-hydroxyacyl-ACP as the acyl donor. Is involved in the biosynthesis of lipid A, a phosphorylated glycolipid that anchors the lipopolysaccharide to the outer membrane of the cell. In Herminiimonas arsenicoxydans, this protein is UDP-3-O-acylglucosamine N-acyltransferase.